The chain runs to 801 residues: MLVSYKWLKELVDIDVTPAALAEKMSTTGIEVEGIEVPAEGLSKLVVGHVLSCEDVPETHLHLCQVDTGDETPRQIVCGAPNVKAGIKVIVAVPGARIADNYKIKKGKIRGMESLGMICSLQELGLSDSIIPKEFSDGIQILPDEAVPGDAIFKYLDLDDHIIELSITPNRADALSMRGVAHEVAAIYGKSVSFPEKNLQESDKATSEAIEVAIASDNVLTYASRVVENVKVKPSPQWLQNLLMNAGIRPINNVVDVTNYVLLYFGQPMHAFDYDKFEDHKIVTRAARQGESLVTLDGEKRELTTEDLVITVADKPVALAGVMGGQATEIDANSQTVVLEAAVFDGKSIRKTSGRLNLRSESSSRFEKGVNYATVLEALDFAAAMLQELAEGQVLSGHVQAGQLSTEPVEVSTNLDYVNVRLGTELTFADIQRIFNQLGFGLTGDETRFTVAVPRRRWDISIPADLVEEIARIYGYDKLPTTLPEAGGTAAELTPTQALRRKVRGLAEGLGLTEIISYALTTPEKAIEFAVAPSHLTELMWPMSVERSALRQNMVSGMLDTVAYNVARKQSNLALYEIGKIFEQEVNPKEDLPNEVNHFAFTICGLVAQKDFQTQAQAVDFYHAKGILDTLFANLNLKVQYVPTKDLANMHPGRTALILLDEQVIGFVGQVHPGTAKAYSIPETYVAELDMAALEAALPSDQTFAEITKFPAMTRDIALLLDREVSHQAIVTAIESAGVKRLTKIKLFDVYEGATIQAGKKSMAYSLTFQNPNDNLTDEEVAKYMEKITKALTEQVGAEVR.

The tRNA-binding domain maps to 39–153 (AEGLSKLVVG…DEAVPGDAIF (115 aa)). The B5 domain maps to 406-481 (TEPVEVSTNL…RIYGYDKLPT (76 aa)). Mg(2+)-binding residues include Asp-459, Asp-465, Glu-468, and Glu-469. The FDX-ACB domain occupies 708–801 (TKFPAMTRDI…LTEQVGAEVR (94 aa)).

The protein belongs to the phenylalanyl-tRNA synthetase beta subunit family. Type 1 subfamily. As to quaternary structure, tetramer of two alpha and two beta subunits. Mg(2+) is required as a cofactor.

It is found in the cytoplasm. It carries out the reaction tRNA(Phe) + L-phenylalanine + ATP = L-phenylalanyl-tRNA(Phe) + AMP + diphosphate + H(+). This is Phenylalanine--tRNA ligase beta subunit from Streptococcus pyogenes serotype M3 (strain SSI-1).